The sequence spans 383 residues: MGRAPCCDKVGLKRGRWTAEEDQILANYIAEHGEGSWRSLPKNAGLLRCGKSCRLRWINYLRADVKRGNISKEEEDIIIKLHATLGNRWSLIASHFPGRTDNEIKNYWNSHLSRQIHTYRRKYTAAPDTTVIIDMSKLHSAEKRRGGRTPGWSPKSSSANTTTNTTSSKTNKSKETDPGPGLKSACDAKGASSPPTAATTTSAASSPRHSDGARSAVVDPDPNQPNSSSGSTAEGPCSGEDATGPWELDPIDLGDLWEAESEIDALMSMDAPLEGFDAVVGEAQAQVDDLFDMDMDWDGFAAHLWGGPEQNDHIAELQQAAEPQATAAACTPNEHEPQVAAAAAACTPDEHEPQAAAAAAAATCTPDEHGLEAFETWLLSDSF.

HTH myb-type domains lie at 9–61 (KVGL…INYL) and 62–116 (RADV…SRQI). 2 DNA-binding regions (H-T-H motif) span residues 37-61 (WRSL…INYL) and 89-112 (WSLI…NSHL). The segment at 136 to 250 (SKLHSAEKRR…DATGPWELDP (115 aa)) is disordered. Composition is skewed to low complexity over residues 155–170 (KSSS…SSKT) and 191–207 (ASSP…ASSP).

The protein localises to the nucleus. Its pathway is pigment biosynthesis. Transcription factor involved in regulating the biosynthetic pathway of flavan-4-ol-derived red phlobaphene and red-brown 3-deoxyanthocyanidin (3-DA) pigments. Regulates transcription of chalcone synthase, chalcone isomerase, dihydroflavonol reductase and flavonoid 3'-hydroxylase genes required for the phlobaphene and 3-DA biosynthesis. Transcription of these genes is activated in mesocotyls in response to ingress of non-pathogenic fungus C.heterostrophus. Regulates the production of 3-DA phytoalexins (luteolinidin, 5-methoxyluteolinidin, apigeninidin and 7-methoxyapigeninidin) in mesocotyls in response to C.heterostrophus and corn leaf aphid (CLA) R.maidis. Involved in resistance against anthracnose leaf blight (ALB) caused by the pathogenic C.sublineolum fungus by inducing the production of 3-DA phytoalexins. Confers resistance, also by inducing the production of 3-DA phytoalexins, against CLA R.maidis, which is an insect and a pest. The sequence is that of Transcription factor Y1 from Sorghum bicolor (Sorghum).